We begin with the raw amino-acid sequence, 725 residues long: Fatty acid oxidation complex subunit alpha (725 aa).

Residues 1–189 (MLYKGDTLYL…KIGLVDGVVK (189 aa)) form an enoyl-CoA hydratase/isomerase region. Substrate is bound at residue Asp-296. The interval 311-725 (ETPKQAAVLG…RLNQPVRLVL (415 aa)) is 3-hydroxyacyl-CoA dehydrogenase. Residues Met-324, Asp-343, 400 to 402 (VVE), Lys-407, and Ser-429 contribute to the NAD(+) site. His-450 serves as the catalytic For 3-hydroxyacyl-CoA dehydrogenase activity. Asn-453 contributes to the NAD(+) binding site. Substrate-binding residues include Asn-500 and Tyr-660.

The protein in the N-terminal section; belongs to the enoyl-CoA hydratase/isomerase family. This sequence in the C-terminal section; belongs to the 3-hydroxyacyl-CoA dehydrogenase family. Heterotetramer of two alpha chains (FadB) and two beta chains (FadA).

The enzyme catalyses a (3S)-3-hydroxyacyl-CoA + NAD(+) = a 3-oxoacyl-CoA + NADH + H(+). It carries out the reaction a (3S)-3-hydroxyacyl-CoA = a (2E)-enoyl-CoA + H2O. The catalysed reaction is a 4-saturated-(3S)-3-hydroxyacyl-CoA = a (3E)-enoyl-CoA + H2O. It catalyses the reaction (3S)-3-hydroxybutanoyl-CoA = (3R)-3-hydroxybutanoyl-CoA. The enzyme catalyses a (3Z)-enoyl-CoA = a 4-saturated (2E)-enoyl-CoA. It carries out the reaction a (3E)-enoyl-CoA = a 4-saturated (2E)-enoyl-CoA. Its pathway is lipid metabolism; fatty acid beta-oxidation. Functionally, involved in the aerobic and anaerobic degradation of long-chain fatty acids via beta-oxidation cycle. Catalyzes the formation of 3-oxoacyl-CoA from enoyl-CoA via L-3-hydroxyacyl-CoA. It can also use D-3-hydroxyacyl-CoA and cis-3-enoyl-CoA as substrate. The polypeptide is Fatty acid oxidation complex subunit alpha (Salmonella paratyphi A (strain ATCC 9150 / SARB42)).